An 800-amino-acid polypeptide reads, in one-letter code: DNA topoisomerase 4 subunit A (800 aa).

The Topo IIA-type catalytic domain maps to 31 to 495 (LPDVRDGLKP…EIEEIKIDKE (465 aa)). Tyr-119 (O-(5'-phospho-DNA)-tyrosine intermediate) is an active-site residue.

Belongs to the type II topoisomerase GyrA/ParC subunit family. ParC type 2 subfamily. Heterotetramer composed of ParC and ParE.

The protein resides in the cell membrane. It catalyses the reaction ATP-dependent breakage, passage and rejoining of double-stranded DNA.. Functionally, topoisomerase IV is essential for chromosome segregation. It relaxes supercoiled DNA. Performs the decatenation events required during the replication of a circular DNA molecule. This Staphylococcus aureus (strain N315) protein is DNA topoisomerase 4 subunit A.